Here is a 249-residue protein sequence, read N- to C-terminus: Proteasome activator complex subunit 1 (249 aa).

The disordered stretch occupies residues 55–102; sequence SNLKAPLDIPVPDPVKEKEKEERRKQQEKEDKDEKKKGEDEDKGPPCG. The span at 68-98 shows a compositional bias: basic and acidic residues; the sequence is PVKEKEKEERRKQQEKEDKDEKKKGEDEDKG.

This sequence belongs to the PA28 family. Heterodimer of PSME1 and PSME2, which forms a hexameric ring. PSME1 can form homoheptamers.

Functionally, implicated in immunoproteasome assembly and required for efficient antigen processing. The PA28 activator complex enhances the generation of class I binding peptides by altering the cleavage pattern of the proteasome. The polypeptide is Proteasome activator complex subunit 1 (PSME1) (Bos taurus (Bovine)).